Here is a 114-residue protein sequence, read N- to C-terminus: Class I hydrophobin 6 (114 aa).

The first 19 residues, 1-19 (MLFKQLILVATALTTLAVA), serve as a signal peptide directing secretion. 4 cysteine pairs are disulfide-bonded: C33–C93, C40–C87, C41–C74, and C94–C107. N-linked (GlcNAc...) asparagine glycosylation is present at N42.

The protein belongs to the fungal hydrophobin family. Self-assembles to form functional amyloid fibrils called rodlets. Self-assembly into fibrillar rodlets occurs spontaneously at hydrophobic:hydrophilic interfaces and the rodlets further associate laterally to form amphipathic monolayers.

It is found in the secreted. It localises to the cell wall. Aerial growth, conidiation, and dispersal of filamentous fungi in the environment rely upon a capability of their secreting small amphipathic proteins called hydrophobins (HPBs) with low sequence identity. Class I can self-assemble into an outermost layer of rodlet bundles on aerial cell surfaces, conferring cellular hydrophobicity that supports fungal growth, development and dispersal; whereas Class II form highly ordered films at water-air interfaces through intermolecular interactions but contribute nothing to the rodlet structure. This is Class I hydrophobin 6 from Pleurotus ostreatus (strain PC15) (Oyster mushroom).